A 634-amino-acid chain; its full sequence is Coilin (634 aa).

Disordered regions lie at residues 87–135 (VSPA…IAEN), 149–276 (PGPS…KLSQ), and 342–361 (GAKSDDTAKQFPSNGKDSTL). Over residues 152 to 181 (SVQSKLLTNKGTPKAPETQTEVSNMSANIE) the composition is skewed to polar residues. 2 stretches are compositionally biased toward basic and acidic residues: residues 223–234 (TLKEGKMSESKN) and 251–272 (KENETREEQQDKTHLESNKIPD).

The protein belongs to the coilin family. In terms of tissue distribution, in egg chambers expressed in the follicle cells, nurse cells and oocyte. Expressed in the larval brain, salivary glands, fat bodies and in the somatic hub cells at the tip of the testis. Expressed in the spermatogonia and spermatocytes, and in the adult ejaculatory duct (at protein level). Expressed in the adult Malpighian tubules.

Its subcellular location is the nucleus. It is found in the nucleoplasm. It localises to the cajal body. The protein localises to the chromosome. The protein resides in the centromere. Its subcellular location is the cytoplasm. It is found in the cytoskeleton. It localises to the spindle. In terms of biological role, component of nuclear coiled bodies, also known as Cajal bodies or CBs, which are involved in the modification and assembly of nucleoplasmic snRNPs. Required for Cajal body formation. The protein is Coilin of Drosophila melanogaster (Fruit fly).